Here is a 456-residue protein sequence, read N- to C-terminus: Divalent metal cation transporter MntH (456 aa).

11 helical membrane passes run 47–67 (ALSF…PGNW), 77–97 (FGYA…LLQA), 123–143 (AWPL…AEVI), 151–171 (LLFG…VLLV), 184–204 (ALII…IIMA), 227–247 (MLYI…LYLH), 276–296 (IALT…AASF), 316–336 (PLLG…CCGL), 369–389 (FVAI…GTTE), 392–412 (ILSQ…LVIF), and 422–442 (LAAA…IVVL).

The protein belongs to the NRAMP family.

The protein resides in the cell inner membrane. H(+)-stimulated, divalent metal cation uptake system. This Brucella suis biovar 1 (strain 1330) protein is Divalent metal cation transporter MntH.